The primary structure comprises 70 residues: MKKGIHPNYVEITATCSCGNVIKTHSTVGHDLNLDVCGKCHPFFTGKQRVVDTGGRVERFNKRFSIPGSK.

Zn(2+) contacts are provided by Cys-16, Cys-18, Cys-37, and Cys-40.

This sequence belongs to the bacterial ribosomal protein bL31 family. Type A subfamily. In terms of assembly, part of the 50S ribosomal subunit. The cofactor is Zn(2+).

In terms of biological role, binds the 23S rRNA. This Salmonella agona (strain SL483) protein is Large ribosomal subunit protein bL31.